The primary structure comprises 266 residues: Metallo-beta-lactamase domain-containing protein 1 (266 aa).

Residues 48-71 (LPQTRGPASSHRESPRGSGGAEAA) form a disordered region. Zn(2+) is bound by residues histidine 114, histidine 116, aspartate 118, histidine 119, histidine 169, aspartate 192, and histidine 231. Residues 229 to 266 (PGHGPPFRVLREASQPETEGGGNSQQEPVVGDEEPALH) form a disordered region.

It belongs to the metallo-beta-lactamase superfamily. Glyoxalase II family. As to quaternary structure, homodimer. Zn(2+) is required as a cofactor.

It localises to the cytoplasm. The protein localises to the cytosol. The protein resides in the nucleus. It carries out the reaction a ribonucleotidyl-ribonucleotide-RNA + H2O = a 3'-end ribonucleotide-RNA + a 5'-end 5'-phospho-ribonucleoside-RNA + H(+). Its function is as follows. Endoribonuclease that catalyzes the hydrolysis of histone-coding pre-mRNA 3'-end. Involved in histone pre-mRNA processing during the S-phase of the cell cycle, which is required for entering/progressing through S-phase. Cleaves histone pre-mRNA at a major and a minor cleavage site after the 5'-ACCCA-3' and the 5'-ACCCACA-3' sequence, respectively, and located downstream of the stem-loop. May require the presence of the HDE element located at the histone pre-RNA 3'-end to avoid non-specific cleavage. This is Metallo-beta-lactamase domain-containing protein 1 from Homo sapiens (Human).